Consider the following 546-residue polypeptide: uncharacterized protein (546 aa).

Transmembrane regions (helical) follow at residues 4 to 23 (ILLE…GYPL), 30 to 47 (GSSL…AMGS), 57 to 79 (IVYV…PAFV), 91 to 113 (ALII…LLGF), and 155 to 177 (PVVG…ISLV). RCK C-terminal domains lie at 189-274 (GKRL…FLGE) and 275-359 (VSEE…FFGD). 6 helical membrane passes run 372-394 (FSLG…GGIT), 399-421 (FAGG…SMVW), 434-456 (IGLV…TTLA), 460-482 (GLAI…LWIG), 489-511 (PMSI…GYAL), and 521-543 (IGYA…ILLT).

This sequence belongs to the AAE transporter (TC 2.A.81) family.

The protein localises to the cell membrane. This is an uncharacterized protein from Geobacter sulfurreducens (strain ATCC 51573 / DSM 12127 / PCA).